Consider the following 1011-residue polypeptide: Vacuolar membrane protease (1011 aa).

The Cytoplasmic portion of the chain corresponds to 1-14 (MKLTKAVFRFRRTN). A helical transmembrane segment spans residues 15-35 (LSTLLVITYLVITTLYVWDHF). At 36–352 (RYHFTLPSDY…WFVVWSARSL (317 aa)) the chain is on the vacuolar side. The Zn(2+) site is built by His-149, Asp-161, Glu-194, Glu-219, and His-293. A helical transmembrane segment spans residues 353–373 (FYWNCIILALFPSILAILFLV). The Cytoplasmic portion of the chain corresponds to 374 to 390 (AYDMQLLKFNFWDAMLR). A helical transmembrane segment spans residues 391 to 411 (LPVSVCLAYFCVKLFQVLVGQ). Residues 412 to 420 (LNPYVFSRD) lie on the Vacuolar side of the membrane. Residues 421–441 (YVSPILAEASMFIFMNYVILS) traverse the membrane as a helical segment. Residues 442–451 (SWERLRPLRD) are Cytoplasmic-facing. Residues 452–472 (FKTVALVEVSMVLWIYLISVT) traverse the membrane as a helical segment. The Vacuolar segment spans residues 473–487 (RWLRDSDYTATGLYP). A helical membrane pass occupies residues 488 to 508 (FTIGYTFVSIGAIIGVFCATF). Over 509–647 (KAKLNPEDDS…SILNYDWSIQ (139 aa)) the chain is Cytoplasmic. The interval 534-585 (MQHQYQQHSQKHSNQHSPHHSTHHSAQHSVHHSPRQSIHQVPSSEQRQRDAS) is disordered. Residues 542 to 567 (SQKHSNQHSPHHSTHHSAQHSVHHSP) show a composition bias toward basic residues. Positions 568–578 (RQSIHQVPSSE) are enriched in polar residues. A helical transmembrane segment spans residues 648 to 668 (FMVVTPWVTYFTWICLDLIMG). The Vacuolar portion of the chain corresponds to 669-681 (AMNQTIQESAKGT). Asn-671 carries N-linked (GlcNAc...) asparagine glycosylation. Residues 682–702 (TFVTHMALIGSLLLSLPMLPF) form a helical membrane-spanning segment. Residues 703–708 (TYKLHS) lie on the Cytoplasmic side of the membrane. Residues 709–729 (FAGMLFLLLAVTTAVWTIVAP) traverse the membrane as a helical segment. Over 730-1011 (PFTESSPLKL…MVSVTKYVEL (282 aa)) the chain is Vacuolar. N-linked (GlcNAc...) asparagine glycosylation is found at Asn-751, Asn-825, and Asn-854.

This sequence belongs to the peptidase M28 family. Requires Zn(2+) as cofactor.

Its subcellular location is the vacuole membrane. In terms of biological role, may be involved in vacuolar sorting and osmoregulation. This is Vacuolar membrane protease from Eremothecium gossypii (strain ATCC 10895 / CBS 109.51 / FGSC 9923 / NRRL Y-1056) (Yeast).